The sequence spans 98 residues: Small ribosomal subunit protein bS6 (98 aa).

Belongs to the bacterial ribosomal protein bS6 family.

Its function is as follows. Binds together with bS18 to 16S ribosomal RNA. This Lactobacillus helveticus (strain DPC 4571) protein is Small ribosomal subunit protein bS6.